The sequence spans 285 residues: Chalcone synthase 6-4 (285 aa).

C60 is a catalytic residue.

This sequence belongs to the thiolase-like superfamily. Chalcone/stilbene synthases family.

It catalyses the reaction (E)-4-coumaroyl-CoA + 3 malonyl-CoA + 3 H(+) = 2',4,4',6'-tetrahydroxychalcone + 3 CO2 + 4 CoA. Its pathway is secondary metabolite biosynthesis; flavonoid biosynthesis. Functionally, the primary product of this enzyme is 4,2',4',6'-tetrahydroxychalcone (also termed naringenin-chalcone or chalcone) which can under specific conditions spontaneously isomerize into naringenin. In Medicago sativa (Alfalfa), this protein is Chalcone synthase 6-4 (CHS6-4).